A 1531-amino-acid chain; its full sequence is Protein turtle (1531 aa).

Residues 1 to 858 are Extracellular-facing; that stretch reads MGVCADLGSH…PARVKHKAIT (858 aa). The disordered stretch occupies residues 19–44; it reads QHNTEKSKEQQQQSQPLEIPEQRASK. Ig-like C2-type domains lie at 132 to 243, 253 to 340, 344 to 436, 440 to 529, and 536 to 624; these read PEDA…KNGT, PRFS…ARVI, GAVI…AYLS, PAKV…GVMD, and PAFT…MAVT. Disulfide bonds link C150–C227, C275–C324, C366–C419, C462–C513, and C558–C611. Fibronectin type-III domains are found at residues 632-728 and 760-851; these read QPHA…TLED and PPRN…VPAR. A helical transmembrane segment spans residues 859–879; that stretch reads AGVVGGILFFIVAIILSVCAV. Residues 880 to 1531 are Cytoplasmic-facing; that stretch reads KICNKRKRRK…QAMQQMESVC (652 aa). Disordered stretches follow at residues 1248 to 1269 and 1318 to 1395; these read EETRRQQQQKQHPLEDHFVPLQ and NLNL…SYPR. Positions 1333 to 1349 are enriched in low complexity; that stretch reads SPESRSSSSGFGSKNTS. Residues 1380 to 1389 show a composition bias toward polar residues; sequence QQAQGQTPHG.

It belongs to the immunoglobulin superfamily. Turtle family. Interacts with bdl. As to expression, exclusively expressed in the central nervous system.

It localises to the membrane. In terms of biological role, essential protein that plays a role in the establishment of coordinated motor control. In the developing eye, involved in axonal targeting of the R7 photoreceptor. This chain is Protein turtle (tutl), found in Drosophila melanogaster (Fruit fly).